The primary structure comprises 210 residues: Fibroblast growth factor 21 (210 aa).

Residues 1 to 28 (MEWMRSRVGTLGLWVRLLLAVFLLGVYQ) form the signal peptide. Positions 144-210 (PLRLPQKDSP…LQGRSPSYAS (67 aa)) are disordered.

Belongs to the heparin-binding growth factors family. In terms of assembly, interacts (via C-terminus) with KLB; this interaction is direct. Interacts with FGFR4. As to expression, most abundantly expressed in the liver, also expressed in the thymus at lower levels. Expressed in skeletal muscle (at protein level). Secreted in plasma (at protein level).

It localises to the secreted. Stimulates glucose uptake in differentiated adipocytes via the induction of glucose transporter SLC2A1/GLUT1 expression (but not SLC2A4/GLUT4 expression). Activity probably requires the presence of KLB. Regulates systemic glucose homeostasis and insulin sensitivity. In Mus musculus (Mouse), this protein is Fibroblast growth factor 21 (Fgf21).